Here is a 653-residue protein sequence, read N- to C-terminus: Rab11 family-interacting protein 5 (653 aa).

Residues 5 to 146 (RGAEPAAGPS…AGRAQHTQWY (142 aa)) form the C2 domain. Ser176, Ser283, Ser286, Ser307, Ser357, and Ser367 each carry phosphoserine. Residues 269 to 300 (GPGAELLTRSPSRSSWLSTEGGRDSAQSPKLF) form a disordered region. The span at 277–286 (RSPSRSSWLS) shows a compositional bias: polar residues. Disordered regions lie at residues 342–402 (HIYN…AVLG) and 415–548 (PGAS…RSSL). Positions 357 to 368 (SISGSLPSSGSL) are enriched in low complexity. Residues 375-387 (FSEEGPRSTDDTW) are compositionally biased toward basic and acidic residues. Phosphoserine occurs at positions 391 and 395. Basic and acidic residues-rich tracts occupy residues 420–430 (PGEEEGARLPE) and 447–460 (VAEK…ERKP). Ser494, Ser538, Ser547, and Ser553 each carry phosphoserine. The region spanning 586–648 (KDSAVLDQSA…ETSPTLLQIP (63 aa)) is the FIP-RBD domain.

As to quaternary structure, interacts with RAB11FIP4. Interacts with NAPG. Interacts with RO60. Interacts with RAB11A that has been activated by GTP binding. In terms of assembly, (Microbial infection) Interacts with Kaposi's sarcoma-associated herpesvirus/HHV-8 protein ORF45; this interaction results in the lysosomal degradation of ORF45 and the inhibition of viral particle release. Post-translationally, phosphorylated on serine and threonine residues. Phosphorylation at Ser-357 is PKA-dependent. Detected at low levels in heart, brain, placenta, lung, liver, adipocytes, kidney, spleen, skeletal muscle and pancreas.

Its subcellular location is the cytoplasm. The protein localises to the recycling endosome membrane. It is found in the early endosome membrane. The protein resides in the golgi apparatus membrane. It localises to the cytoplasmic vesicle. Its subcellular location is the secretory vesicle membrane. The protein localises to the mitochondrion membrane. In terms of biological role, rab effector involved in protein trafficking from apical recycling endosomes to the apical plasma membrane. Involved in insulin granule exocytosis. May regulate V-ATPase intracellular transport in response to extracellular acidosis. The sequence is that of Rab11 family-interacting protein 5 from Homo sapiens (Human).